A 668-amino-acid chain; its full sequence is NADH-ubiquinone oxidoreductase chain 5 (668 aa).

18 helical membrane-spanning segments follow: residues 1–21 (MYIINLILPLIGSIITGLFGH), 31–51 (IAVGCMMLTALSSLYIGYEIL), 81–101 (LTSIMIIVITCISSMVHLYSM), 111–131 (TRFFSYLSLFTFFMMLLVTAD), 133–153 (FVQLFFGWEGVGIMSYLLINF), 178–198 (LFFGILLVFLVFKSVDFSVIF), 211–231 (LLGYEVNAITLIGSFIVIGVV), 251–271 (TPVSALLHAATMVTAGVFLVL), 283–303 (ILNILTIIGALTTLFATTIGI), 311–331 (VIAYSTCSQLGYMIFACGLLN), 339–359 (LTTHAFFKALLFLSAGSVIHG), 375–395 (LMPLTYQCMLIGTLALTGFPF), 421–441 (AIIGYVAAFGTTFYSFRLLIL), 462–482 (TNMVIPLVILAICSIFIGYLT), 519–539 (LLPLFAFIYGVLTPVLFYFNL), 566–586 (FDFLSRVLIAVPFFHLSYDVM), 629–649 (IVQAILLIIFVGIFSFMIGFL), and 650–668 (YVELFVILGALYLCLPKIK).

This sequence belongs to the complex I subunit 5 family.

It is found in the mitochondrion inner membrane. The enzyme catalyses a ubiquinone + NADH + 5 H(+)(in) = a ubiquinol + NAD(+) + 4 H(+)(out). Core subunit of the mitochondrial membrane respiratory chain NADH dehydrogenase (Complex I) that is believed to belong to the minimal assembly required for catalysis. Complex I functions in the transfer of electrons from NADH to the respiratory chain. The immediate electron acceptor for the enzyme is believed to be ubiquinone. This chain is NADH-ubiquinone oxidoreductase chain 5 (nad5), found in Dictyostelium citrinum (Slime mold).